The following is a 469-amino-acid chain: MQRGIVWVVDDDSSIRWVLERALAGAGLTCTTFENGAEVLEALASKTPDVLLSDIRMPGMDGLALLKQIKQRHPMLPVIIMTAHSDLDAAVSAYQQGAFDYLPKPFDIDEAVALVERAISHYQEQQQPRNVQLNGPTTDIIGEAPAMQDVFRIIGRLSRSSISVLINGESGTGKELVAHALHRHSPRAKAPFIALNMAAIPKDLIESELFGHEKGAFTGANTIRQGRFEQADGGTLFLDEIGDMPLDVQTRLLRVLADGQFYRVGGYAPVKVDVRIIAATHQNLEQRVQEGKFREDLFHRLNVIRVHLPPLRERREDIPRLARHFLQVAARELGVEAKLLHPETEAALTRLAWPGNVRQLENTCRWLTVMAAGQEVLIQDLPGELFESTVAESTSQMQPDSWATLLAQWADRALRSGHQNLLSEAQPELERTLLTTALRHTQGHKQEAARLLGWGRNTLTRKLKELGME.

A Response regulatory domain is found at 5–119; sequence IVWVVDDDSS…EAVALVERAI (115 aa). The residue at position 54 (Asp54) is a 4-aspartylphosphate. A Sigma-54 factor interaction domain is found at 140-369; the sequence is IIGEAPAMQD…LENTCRWLTV (230 aa). Residues 168 to 175 and 231 to 240 each bind ATP; these read GESGTGKE and ADGGTLFLDE. A DNA-binding region (H-T-H motif) is located at residues 445–464; it reads KQEAARLLGWGRNTLTRKLK.

Phosphorylated and dephosphorylated by NtrB.

It localises to the cytoplasm. Functionally, member of the two-component regulatory system NtrB/NtrC, which controls expression of the nitrogen-regulated (ntr) genes in response to nitrogen limitation. Phosphorylated NtrC binds directly to DNA and stimulates the formation of open promoter-sigma54-RNA polymerase complexes. This chain is DNA-binding transcriptional regulator NtrC (glnG), found in Escherichia coli O157:H7.